Consider the following 440-residue polypeptide: 5-methylthioadenosine/S-adenosylhomocysteine deaminase (440 aa).

Zn(2+) contacts are provided by His70 and His72. Substrate contacts are provided by Glu99 and His191. A Zn(2+)-binding site is contributed by His218. Residues Glu221 and Asp306 each coordinate substrate. A Zn(2+)-binding site is contributed by Asp306.

It belongs to the metallo-dependent hydrolases superfamily. MTA/SAH deaminase family. It depends on Zn(2+) as a cofactor.

It catalyses the reaction S-adenosyl-L-homocysteine + H2O + H(+) = S-inosyl-L-homocysteine + NH4(+). The enzyme catalyses S-methyl-5'-thioadenosine + H2O + H(+) = S-methyl-5'-thioinosine + NH4(+). Catalyzes the deamination of 5-methylthioadenosine and S-adenosyl-L-homocysteine into 5-methylthioinosine and S-inosyl-L-homocysteine, respectively. Is also able to deaminate adenosine. The chain is 5-methylthioadenosine/S-adenosylhomocysteine deaminase from Nitratidesulfovibrio vulgaris (strain DSM 19637 / Miyazaki F) (Desulfovibrio vulgaris).